The following is a 427-amino-acid chain: MSVKWEKQEGNVGKLTFEIEQEKVKEGLDRAFVKVRKTLNVPGFRKGKVPRQIFNQRFGEEALFQDALDILLPEVYSAAIDEAGIDPVDTPQVNIESMEKGETWVLTAEVTVKPEVKLGDYKGLEVEKRETELTTEELEAELKQLQERQAELVVKEDAPAENGDTVILDFEGFKDGVAFEGGQAENHSLELGSGQFIPGFEEKLVGLKAGDEADIELTFPEEYHAEDLAGQPVVFKVKLHEIKTKEVPALDDELAKDIDEEVETLDELKEKISKRLQEAKEESVAQAKQEEVIAKAVENAEVDIPHAMVHHEADHLMNHFAQDLQAQGLTPELYYQFTGQTEEAMHAQMEKDAEKRVKMNLVLEAIAEAENIEPTEEAIDEEISTLAEKYGMEKDAVRAALGDMSELKSDLKIRKAIDVLLDSAVEK.

A PPIase FKBP-type domain is found at 163-248 (GDTVILDFEG…LHEIKTKEVP (86 aa)).

The protein belongs to the FKBP-type PPIase family. Tig subfamily.

The protein localises to the cytoplasm. It carries out the reaction [protein]-peptidylproline (omega=180) = [protein]-peptidylproline (omega=0). Its function is as follows. Involved in protein export. Acts as a chaperone by maintaining the newly synthesized protein in an open conformation. Functions as a peptidyl-prolyl cis-trans isomerase. This Listeria monocytogenes serotype 4b (strain CLIP80459) protein is Trigger factor.